A 231-amino-acid polypeptide reads, in one-letter code: Lytic polysaccharide monooxygenase-like protein X325 (231 aa).

Positions 1-17 (MRLSLLVTLALTALIEA) are cleaved as a signal peptide. Histidine 18 provides a ligand contact to Cu(2+). Asparagine 34, asparagine 55, asparagine 98, asparagine 133, asparagine 174, and asparagine 180 each carry an N-linked (GlcNAc...) asparagine glycan. 2 disulfides stabilise this stretch: cysteine 47–cysteine 157 and cysteine 122–cysteine 178. Isoleucine 202 carries GPI-anchor amidated isoleucine lipidation. A propeptide spans 203–231 (ASTTTGSAPRYYSWAGWLPLVAGAIWMAL) (removed in mature form).

Belongs to the X325 family. Cu(2+) is required as a cofactor.

The protein localises to the cell membrane. Its function is as follows. Lytic polysaccharide monooxygenase-like protein that has diverged to biological functions other than polysaccharide degradation since it does not perform oxidative cleavage of polysaccharides. Acts as a cell surface-bound protein that functions in the copper-accumulation pathway. May also act as the major cell wall sensor that regulates MAP kinase-dependent hyphal anastomosis, the fusion of hyphal cells. The protein is Lytic polysaccharide monooxygenase-like protein X325 of Hypocrea jecorina (strain QM6a) (Trichoderma reesei).